We begin with the raw amino-acid sequence, 704 residues long: D-(-)-3-hydroxybutyrate oligomer hydrolase (704 aa).

A signal peptide spans methionine 1–alanine 31. The active-site Charge relay system is serine 309.

This sequence belongs to the D-(-)-3-hydroxybutyrate oligomer hydrolase family.

The protein localises to the secreted. It catalyses the reaction (3R)-hydroxybutanoate dimer + H2O = 2 (R)-3-hydroxybutanoate + H(+). It participates in lipid metabolism; butanoate metabolism. Its function is as follows. Participates in the degradation of poly-3-hydroxybutyrate (PHB). It works downstream of poly(3-hydroxybutyrate) depolymerase, hydrolyzing D(-)-3-hydroxybutyrate oligomers of various length (3HB-oligomers) into 3HB-monomers. The polypeptide is D-(-)-3-hydroxybutyrate oligomer hydrolase (Albidiferax ferrireducens (strain ATCC BAA-621 / DSM 15236 / T118) (Rhodoferax ferrireducens)).